The sequence spans 145 residues: uncharacterized protein (145 aa).

Residues 1-21 (MWFLVKATFWFSLVLVLLPFL) form a helical membrane-spanning segment. The disordered stretch occupies residues 109–145 (TPAESVPSAEATEKAEPAFKRMPVPEHRLDPGPASGK). A compositionally biased stretch (basic and acidic residues) spans 119-138 (ATEKAEPAFKRMPVPEHRLD).

The protein resides in the membrane. This is an uncharacterized protein from Rhizobium meliloti (strain 1021) (Ensifer meliloti).